The chain runs to 291 residues: B-lymphocyte antigen CD20 (291 aa).

Residues 1–44 (MSGPFPAEPTKGPLAMQPAPKVNLKRTSSLVGPTQSFFMRESKA) lie on the Cytoplasmic side of the membrane. Ser-29 is subject to Phosphoserine. Residues 45 to 65 (LGAVQIMNGLFHITLGGLLMI) form a helical membrane-spanning segment. At 66-68 (PTG) the chain is on the extracellular side. A helical transmembrane segment spans residues 69 to 89 (VFAPICLSVWYPLWGGIMYII). Residues 90–111 (SGSLLAAAAEKTSRKSLVKAKV) are Cytoplasmic-facing. The chain crosses the membrane as a helical span at residues 112-132 (IMSSLSLFAAISGIILSIMDI). Residues 133 to 182 (LNMTLSHFLKMRRLELIQTSKPYVDIYDCEPSNSSEKNSPSTQYCNSIQS) lie on the Extracellular side of the membrane. A helical membrane pass occupies residues 183–203 (VFLGILSAMLISAFFQKLVTA). The Cytoplasmic portion of the chain corresponds to 204-291 (GIVENEWKRM…SLPVENEIAP (88 aa)). Cys-214 carries S-palmitoyl cysteine lipidation. Ser-219 is modified (phosphoserine). Thr-233 carries the post-translational modification Phosphothreonine. A compositionally biased stretch (acidic residues) spans 261-270 (VQEEEEEEAE). A disordered region spans residues 261–291 (VQEEEEEEAEINFPAPPQEQESLPVENEIAP).

The protein belongs to the MS4A family. In terms of assembly, forms homotetramers. Interacts with the heavy and light chains of cell surface IgM, the antigen-binding components of the BCR. In terms of processing, phosphorylated.

The protein localises to the cell membrane. B-lymphocyte-specific membrane protein that plays a role in the regulation of cellular calcium influx necessary for the development, differentiation, and activation of B-lymphocytes. Functions as a store-operated calcium (SOC) channel component promoting calcium influx after activation by the B-cell receptor/BCR. This is B-lymphocyte antigen CD20 (Ms4a1) from Mus musculus (Mouse).